We begin with the raw amino-acid sequence, 451 residues long: uncharacterized protein (451 aa).

An N-terminal signal peptide occupies residues 1–18 (MRTRITLALAVLLLLLAG). Cys-19 is lipidated: N-palmitoyl cysteine. A lipid anchor (S-diacylglycerol cysteine) is attached at Cys-19. Residues 424-451 (TSADPPPGVPRAGKRNIRDATSRLPSTP) are disordered.

The protein resides in the cell membrane. Its function is as follows. May participate in oleandomycin glycosylation and secretion during antibiotic production. This is an uncharacterized protein from Streptomyces antibioticus.